The following is a 299-amino-acid chain: Probable lipid kinase YegS (299 aa).

A DAGKc domain is found at A2 to T133. ATP contacts are provided by residues T40, G66–E72, and T95. Mg(2+) contacts are provided by L215, D218, and L220. E271 functions as the Proton acceptor in the catalytic mechanism.

It belongs to the diacylglycerol/lipid kinase family. YegS lipid kinase subfamily. It depends on Mg(2+) as a cofactor. Requires Ca(2+) as cofactor.

The protein resides in the cytoplasm. Its function is as follows. Probably phosphorylates lipids; the in vivo substrate is unknown. The sequence is that of Probable lipid kinase YegS from Shigella flexneri.